The primary structure comprises 216 residues: Somatotropin (216 aa).

Residues 1–26 (MAAGSWTAGLLAFALLCLPWPQEASA) form the signal peptide. His45 serves as a coordination point for Zn(2+). A disulfide bridge links Cys78 with Cys189. At Ser131 the chain carries Phosphoserine. Glu198 contacts Zn(2+). Cys206 and Cys214 are joined by a disulfide.

This sequence belongs to the somatotropin/prolactin family.

The protein resides in the secreted. Functionally, plays an important role in growth control. Its major role in stimulating body growth is to stimulate the liver and other tissues to secrete IGF1. It stimulates both the differentiation and proliferation of myoblasts. It also stimulates amino acid uptake and protein synthesis in muscle and other tissues. In Oryctolagus cuniculus (Rabbit), this protein is Somatotropin (GH1).